A 606-amino-acid polypeptide reads, in one-letter code: Transcription factor glial cells missing 2 (606 aa).

A compositionally biased stretch (polar residues) spans 20-37 (DHSQLTQFVQPQSQSTHS). Disordered regions lie at residues 20 to 65 (DHSQ…KGKR), 475 to 501 (EMQQ…HHYY), and 561 to 606 (TAPT…SVTH). Low complexity predominate over residues 44 to 61 (PGQQQAGGSMTMPSSSTG). A DNA-binding region (GCM) is located at residues 65–224 (REWDINDAIV…KNSSVSKRAF (160 aa)). The span at 490–501 (FGGNQTAGHHYY) shows a compositional bias: polar residues. A compositionally biased stretch (pro residues) spans 569-580 (PGHPPPPPPPPT). The segment covering 583–593 (YHHHHHHHLHH) has biased composition (basic residues). A compositionally biased stretch (low complexity) spans 594-606 (PAAATGLAPSVTH).

In terms of tissue distribution, expressed in glial lineages within embryonic procephalic mesoderm. Expression is highest in hemocyte primordia and longitudinal and nerve root ganglia.

It is found in the nucleus. Its function is as follows. Transcription factor with a minor role promoting glial cell differentiation and a more significant role in hematocyte differentiation. Gcm2, together with gcm, is required for the proliferation of plasmatocyte precursors, the expression of Croquemort protein, and the ability of plasmatocytes to convert into macrophages. This Drosophila melanogaster (Fruit fly) protein is Transcription factor glial cells missing 2 (gcm2).